We begin with the raw amino-acid sequence, 245 residues long: Polyhedrin (245 aa).

This sequence belongs to the polyhedrin family.

Its function is as follows. Major component of the virus occlusion bodies, which are large proteinaceous structures (polyhedra), that protect the virus from the outside environment for extended periods until they are ingested by insect larvae. In Bombyx mori nuclear polyhedrosis virus (BmNPV), this protein is Polyhedrin (PH).